A 351-amino-acid polypeptide reads, in one-letter code: MPFVDLEVPTMTTPTPAATPARPRVLTGDRPTGALHLGHLAGSLQNRVRLQDEAELFVLLADVQALTDHFDRPEQVRENVLAVALDYLAAGLDPQKTTCVVQSAVPELAELTVYFLNLVTVSHLRQNPTVKAEIAQKGYGERVPAGFFVYPVSQAADIAAFGATLVPVGDDQLPMLEQTREIVRRFNALYAPVLAEPQAQLSRVPRLPGLDGQAKMSKSLGNAIALGDSADEVARKVMGMYTDPGHLRASDPGRVEGNPVFTFLDAFDPDPARVQALKDQYRAGGLGDVKVKKHLIDVLNGVLAPIRTRRAEYERDPDAVLRFVTEGTARGREVAAQTLGQVRRAMRLFGH.

The tract at residues 1–24 is disordered; that stretch reads MPFVDLEVPTMTTPTPAATPARPR. Positions 9–24 are enriched in low complexity; that stretch reads PTMTTPTPAATPARPR. A 'HIGH' region motif is present at residues 31-39; the sequence is PTGALHLGH. Residues 215–219 carry the 'KMSKS' region motif; that stretch reads KMSKS. An ATP-binding site is contributed by Lys218.

The protein belongs to the class-I aminoacyl-tRNA synthetase family. In terms of assembly, homodimer. Forms a complex with nos; one homodimer of trpS2 binds one homodimer of nos.

The catalysed reaction is tRNA(Trp) + L-tryptophan + ATP = L-tryptophyl-tRNA(Trp) + AMP + diphosphate + H(+). Catalyzes the formation of 5'adenyl-Trp and tRNA(Trp) but with 5-fold less activity than TrpRS. Increases the solubility of the nitric oxide synthase oxygenase (nos), as well as its affinity for substrate L-arginine and its nitric-oxide synthase activity. The complex between trpS2 and nos catalyzes the regioselective nitration of tryptophan at the 4-position. The sequence is that of Tryptophan--tRNA ligase 2 (trpS2) from Deinococcus radiodurans (strain ATCC 13939 / DSM 20539 / JCM 16871 / CCUG 27074 / LMG 4051 / NBRC 15346 / NCIMB 9279 / VKM B-1422 / R1).